The chain runs to 320 residues: Ferrochelatase (320 aa).

The Fe cation site is built by His194 and Glu275.

Belongs to the ferrochelatase family. In terms of assembly, monomer.

It localises to the cytoplasm. It catalyses the reaction heme b + 2 H(+) = protoporphyrin IX + Fe(2+). It functions in the pathway porphyrin-containing compound metabolism; protoheme biosynthesis; protoheme from protoporphyrin-IX: step 1/1. Functionally, catalyzes the ferrous insertion into protoporphyrin IX. This chain is Ferrochelatase, found in Escherichia coli (strain K12 / MC4100 / BW2952).